The primary structure comprises 147 residues: UPF0310 protein in gntR 5'region (147 aa).

The protein belongs to the UPF0310 family.

The sequence is that of UPF0310 protein in gntR 5'region (oug) from Bacillus licheniformis.